Consider the following 454-residue polypeptide: CCA-adding enzyme (454 aa).

2 residues coordinate ATP: Ser-59 and Arg-62. Residues Ser-59 and Arg-62 each contribute to the CTP site. The Mg(2+) site is built by Asp-71, Asp-73, and Asp-125. Positions 148, 167, and 176 each coordinate ATP. Positions 148, 167, and 176 each coordinate CTP.

It belongs to the tRNA nucleotidyltransferase/poly(A) polymerase family. Archaeal CCA-adding enzyme subfamily. Homodimer. The cofactor is Mg(2+).

It carries out the reaction a tRNA precursor + 2 CTP + ATP = a tRNA with a 3' CCA end + 3 diphosphate. The enzyme catalyses a tRNA with a 3' CCA end + 2 CTP + ATP = a tRNA with a 3' CCACCA end + 3 diphosphate. In terms of biological role, catalyzes the addition and repair of the essential 3'-terminal CCA sequence in tRNAs without using a nucleic acid template. Adds these three nucleotides in the order of C, C, and A to the tRNA nucleotide-73, using CTP and ATP as substrates and producing inorganic pyrophosphate. tRNA 3'-terminal CCA addition is required both for tRNA processing and repair. Also involved in tRNA surveillance by mediating tandem CCA addition to generate a CCACCA at the 3' terminus of unstable tRNAs. While stable tRNAs receive only 3'-terminal CCA, unstable tRNAs are marked with CCACCA and rapidly degraded. The chain is CCA-adding enzyme from Methanosarcina barkeri (strain Fusaro / DSM 804).